A 377-amino-acid chain; its full sequence is Dihydroorotate dehydrogenase (quinone) (377 aa).

FMN-binding positions include 78–82 and Ala-102; that span reads AGCDK. Lys-82 contributes to the substrate binding site. Residue 127-130 participates in substrate binding; that stretch reads NRLG. Positions 159 and 192 each coordinate FMN. Asn-192 serves as a coordination point for substrate. The active-site Nucleophile is the Ser-195. Asn-197 contributes to the substrate binding site. FMN is bound by residues Lys-230 and Thr-258. 259-260 is a binding site for substrate; the sequence is NT. FMN-binding positions include Gly-288, Gly-317, and 338–339; that span reads YT.

It belongs to the dihydroorotate dehydrogenase family. Type 2 subfamily. Monomer. Requires FMN as cofactor.

It is found in the cell membrane. It carries out the reaction (S)-dihydroorotate + a quinone = orotate + a quinol. Its pathway is pyrimidine metabolism; UMP biosynthesis via de novo pathway; orotate from (S)-dihydroorotate (quinone route): step 1/1. In terms of biological role, catalyzes the conversion of dihydroorotate to orotate with quinone as electron acceptor. The sequence is that of Dihydroorotate dehydrogenase (quinone) from Rippkaea orientalis (strain PCC 8801 / RF-1) (Cyanothece sp. (strain PCC 8801)).